Reading from the N-terminus, the 966-residue chain is Leucine--tRNA ligase (966 aa).

The short motif at 41 to 51 is the 'HIGH' region element; it reads PYLNGNLHAGH. The 'KMSKS' region motif lies at 632-636; it reads KMSKS. Lys-635 serves as a coordination point for ATP.

It belongs to the class-I aminoacyl-tRNA synthetase family.

Its subcellular location is the cytoplasm. The catalysed reaction is tRNA(Leu) + L-leucine + ATP = L-leucyl-tRNA(Leu) + AMP + diphosphate. The polypeptide is Leucine--tRNA ligase (Methanosarcina barkeri (strain Fusaro / DSM 804)).